Reading from the N-terminus, the 925-residue chain is NADH:fumarate oxidoreductase (925 aa).

Thr447 carries the FMN phosphoryl threonine modification. 7 residues coordinate FAD: Ala492, Glu511, Asn519, Thr520, Ala525, Gly526, and Val633. Ala525 lines the fumarate pocket. Ala525 contributes to the succinate binding site. Succinate-binding residues include His719, Ser731, and Glu732. Ser731 and Glu732 together coordinate fumarate. Arg756 functions as the Proton donor in the catalytic mechanism. His859 is a fumarate binding site. His859 serves as a coordination point for succinate. FAD contacts are provided by His860 and Glu889. Fumarate is bound by residues Arg899 and Gly902. Succinate contacts are provided by Arg899 and Gly902. Residues Ala904 and Val905 each contribute to the FAD site.

Belongs to the FAD-dependent oxidoreductase 2 family. FRD/SDH subfamily. As to quaternary structure, monomer. FAD is required as a cofactor. Requires FMN as cofactor. Post-translationally, is flavinylated on Thr-447 by ApbE2, encoded in a neighboring gene. Flavinylation is essential for catalytic activity.

It localises to the cytoplasm. It catalyses the reaction succinate + NAD(+) = fumarate + NADH + H(+). In terms of biological role, catalyzes the anaerobic reduction of fumarate to succinate. Uses NADH as the inherent electron donor in this process. Is involved in anaerobic fumarate respiration in K.pneumoniae. The polypeptide is NADH:fumarate oxidoreductase (Klebsiella pneumoniae (strain 342)).